A 321-amino-acid polypeptide reads, in one-letter code: tRNA U34 carboxymethyltransferase (321 aa).

Residues K90, W104, K109, G129, D151 to T153, I180 to E181, M195, Y199, and R314 each bind carboxy-S-adenosyl-L-methionine.

Belongs to the class I-like SAM-binding methyltransferase superfamily. CmoB family. As to quaternary structure, homotetramer.

The enzyme catalyses carboxy-S-adenosyl-L-methionine + 5-hydroxyuridine(34) in tRNA = 5-carboxymethoxyuridine(34) in tRNA + S-adenosyl-L-homocysteine + H(+). In terms of biological role, catalyzes carboxymethyl transfer from carboxy-S-adenosyl-L-methionine (Cx-SAM) to 5-hydroxyuridine (ho5U) to form 5-carboxymethoxyuridine (cmo5U) at position 34 in tRNAs. The protein is tRNA U34 carboxymethyltransferase of Haemophilus influenzae (strain PittGG).